The primary structure comprises 344 residues: MPMQGAQRKLLGSLNSTPTATSNPGLAANHTGAPCLEVSIPDGLFLSLGLVSLVENVLVVAAIAKNRNLHSSMYYFICCLALSDLLVSGSNMLETAIILLLEAGTLATRASVVQQLHNTIDVLTCSSMLCSLCFLGAIAVDRYISIFYALRYHSIMTLPRAQRAIAAIWVASVLSSTLFITYYDHAAVLLCLVVFFLAMLVLMAVLYVHMLARACQHAQGIIRLHNRQLPAHKGFGLRGAATLTILLGIFFLCWGPFFLHLTLVVFCPQHLTCNCIFKNFKVFLTLIICNTIIDPLIYAFRSQELRRTLKEVLLCSSWPGCWAEGGGDSVWPGSCVTLRGPLPP.

The Extracellular segment spans residues 1–37 (MPMQGAQRKLLGSLNSTPTATSNPGLAANHTGAPCLE). The N-linked (GlcNAc...) asparagine glycan is linked to Asn29. The helical transmembrane segment at 38 to 63 (VSIPDGLFLSLGLVSLVENVLVVAAI) threads the bilayer. The Cytoplasmic portion of the chain corresponds to 64-72 (AKNRNLHSS). The helical transmembrane segment at 73–93 (MYYFICCLALSDLLVSGSNML) threads the bilayer. The Extracellular portion of the chain corresponds to 94-118 (ETAIILLLEAGTLATRASVVQQLHN). The chain crosses the membrane as a helical span at residues 119–140 (TIDVLTCSSMLCSLCFLGAIAV). Residues 141–163 (DRYISIFYALRYHSIMTLPRAQR) are Cytoplasmic-facing. A helical transmembrane segment spans residues 164 to 183 (AIAAIWVASVLSSTLFITYY). The Extracellular portion of the chain corresponds to 184-191 (DHAAVLLC). A helical membrane pass occupies residues 192-211 (LVVFFLAMLVLMAVLYVHML). Over 212–240 (ARACQHAQGIIRLHNRQLPAHKGFGLRGA) the chain is Cytoplasmic. The helical transmembrane segment at 241 to 266 (ATLTILLGIFFLCWGPFFLHLTLVVF) threads the bilayer. The Extracellular portion of the chain corresponds to 267–279 (CPQHLTCNCIFKN). A helical transmembrane segment spans residues 280 to 300 (FKVFLTLIICNTIIDPLIYAF). Over 301 to 344 (RSQELRRTLKEVLLCSSWPGCWAEGGGDSVWPGSCVTLRGPLPP) the chain is Cytoplasmic. The S-palmitoyl cysteine moiety is linked to residue Cys315.

This sequence belongs to the G-protein coupled receptor 1 family. In terms of assembly, interacts with MGRN1, but does not undergo MGRN1-mediated ubiquitination; this interaction competes with GNAS-binding and thus inhibits agonist-induced cAMP production. Interacts with OPN3; the interaction results in a decrease in MC1R-mediated cAMP signaling and ultimately a decrease in melanin production in melanocytes.

It is found in the cell membrane. Functionally, receptor for MSH (alpha, beta and gamma) and ACTH. The activity of this receptor is mediated by G proteins which activate adenylate cyclase. Mediates melanogenesis, the production of eumelanin (black/brown) and phaeomelanin (red/yellow), via regulation of cAMP signaling in melanocytes. This chain is Melanocyte-stimulating hormone receptor (MC1R), found in Callithrix jacchus (White-tufted-ear marmoset).